The sequence spans 415 residues: Homoserine O-succinyltransferase (415 aa).

Residues Asn69–Asp383 enclose the AB hydrolase-1 domain. Ser175 serves as the catalytic Nucleophile. A substrate-binding site is contributed by Arg245. Active-site residues include Asp344 and His377. Asp378 provides a ligand contact to substrate.

Belongs to the AB hydrolase superfamily. MetX family. Homodimer.

The protein localises to the cytoplasm. The catalysed reaction is L-homoserine + succinyl-CoA = O-succinyl-L-homoserine + CoA. The protein operates within amino-acid biosynthesis; L-methionine biosynthesis via de novo pathway; O-succinyl-L-homoserine from L-homoserine: step 1/1. Functionally, transfers a succinyl group from succinyl-CoA to L-homoserine, forming succinyl-L-homoserine. The polypeptide is Homoserine O-succinyltransferase (Bordetella pertussis (strain Tohama I / ATCC BAA-589 / NCTC 13251)).